The chain runs to 438 residues: Na(+)/H(+) antiporter NhaA (438 aa).

A run of 11 helical transmembrane segments spans residues 23 to 43 (FGGI…NSFL), 62 to 82 (FFIG…LFFL), 104 to 124 (SFPV…YFFL), 133 to 153 (GFGI…MLLG), 162 to 182 (VFLI…IALF), 185 to 205 (TNLK…LAIL), 212 to 232 (SLIP…QSGI), 302 to 322 (FLAP…NAGV), 337 to 357 (LGVI…ITFI), 372 to 392 (WWHI…SMFI), and 410 to 430 (IAIL…LFAL).

Belongs to the NhaA Na(+)/H(+) (TC 2.A.33) antiporter family.

It is found in the cell inner membrane. The catalysed reaction is Na(+)(in) + 2 H(+)(out) = Na(+)(out) + 2 H(+)(in). Na(+)/H(+) antiporter that extrudes sodium in exchange for external protons. This Helicobacter pylori (strain J99 / ATCC 700824) (Campylobacter pylori J99) protein is Na(+)/H(+) antiporter NhaA.